The chain runs to 427 residues: 11-beta-hydroxysteroid dehydrogenase type 2 (427 aa).

Residue threonine 82–alanine 111 coordinates NAD(+). Residue serine 219 participates in substrate binding. Tyrosine 232 acts as the Proton acceptor in catalysis.

It belongs to the short-chain dehydrogenases/reductases (SDR) family. In terms of assembly, interacts with ligand-free cytoplasmic NR3C2. In terms of tissue distribution, highly expressed in the kidney and adrenal and at lower levels in the colon.

It localises to the microsome. The protein resides in the endoplasmic reticulum. It catalyses the reaction an 11beta-hydroxysteroid + NAD(+) = an 11-oxosteroid + NADH + H(+). The enzyme catalyses corticosterone + NAD(+) = 11-dehydrocorticosterone + NADH + H(+). It carries out the reaction cortisol + NAD(+) = cortisone + NADH + H(+). The catalysed reaction is 11beta,17beta-dihydroxyandrost-4-ene-3-one + NAD(+) = 17beta-hydroxyandrost-4-ene-3,11-dione + NADH + H(+). It catalyses the reaction 11beta-hydroxyandrost-4-ene-3,17-dione + NAD(+) = androst-4-ene-3,11,17-trione + NADH + H(+). Its pathway is steroid metabolism. Inhibited by glycyrrhetinic acid, carbenoloxone, 11-alpha-OH-progesterone and 11-beta-OH-progesterone. In terms of biological role, catalyzes the conversion of biologically active 11beta-hydroxyglucocorticoids (11beta-hydroxysteroid) such as cortisol, to inactive 11-ketoglucocorticoids (11-oxosteroid) such as cortisone, in the presence of NAD(+). Functions as a dehydrogenase (oxidase), thereby decreasing the concentration of active glucocorticoids, thus protecting the nonselective mineralocorticoid receptor from occupation by glucocorticoids. Plays an important role in maintaining glucocorticoids balance during preimplantation and protects the fetus from excessive maternal corticosterone exposure. Catalyzes the oxidation of 11beta-hydroxytestosterone (11beta,17beta-dihydroxyandrost-4-ene-3-one) to 11-ketotestosterone (17beta-hydroxyandrost-4-ene-3,11-dione), a major bioactive androgen. Catalyzes the conversion of 11beta-hydroxyandrostenedione (11beta-hydroxyandrost-4-ene-3,17-dione) to 11-ketoandrostenedione (androst-4-ene-3,11,17-trione), which can be further metabolized to 11-ketotestosterone. Converts 7-beta-25-dihydroxycholesterol to 7-oxo-25-hydroxycholesterol in vitro. 7-beta-25-dihydroxycholesterol (not 7-oxo-25-hydroxycholesterol) acts as a ligand for the G-protein-coupled receptor (GPCR) Epstein-Barr virus-induced gene 2 (EBI2) and may thereby regulate immune cell migration. May protect ovulating oocytes and fertilizing spermatozoa from the adverse effects of cortisol. This chain is 11-beta-hydroxysteroid dehydrogenase type 2 (HSD11B2), found in Ovis aries (Sheep).